We begin with the raw amino-acid sequence, 182 residues long: Transcription antitermination protein NusB (182 aa).

The segment at 159–182 (TPVENSEAEAAGYPVEESIEEDSQ) is disordered.

The protein belongs to the NusB family.

Functionally, involved in transcription antitermination. Required for transcription of ribosomal RNA (rRNA) genes. Binds specifically to the boxA antiterminator sequence of the ribosomal RNA (rrn) operons. This is Transcription antitermination protein NusB from Corynebacterium diphtheriae (strain ATCC 700971 / NCTC 13129 / Biotype gravis).